The primary structure comprises 99 residues: Aspartyl/glutamyl-tRNA(Asn/Gln) amidotransferase subunit C (99 aa).

Belongs to the GatC family. Heterotrimer of A, B and C subunits.

The catalysed reaction is L-glutamyl-tRNA(Gln) + L-glutamine + ATP + H2O = L-glutaminyl-tRNA(Gln) + L-glutamate + ADP + phosphate + H(+). It carries out the reaction L-aspartyl-tRNA(Asn) + L-glutamine + ATP + H2O = L-asparaginyl-tRNA(Asn) + L-glutamate + ADP + phosphate + 2 H(+). In terms of biological role, allows the formation of correctly charged Asn-tRNA(Asn) or Gln-tRNA(Gln) through the transamidation of misacylated Asp-tRNA(Asn) or Glu-tRNA(Gln) in organisms which lack either or both of asparaginyl-tRNA or glutaminyl-tRNA synthetases. The reaction takes place in the presence of glutamine and ATP through an activated phospho-Asp-tRNA(Asn) or phospho-Glu-tRNA(Gln). In Sulfurihydrogenibium sp. (strain YO3AOP1), this protein is Aspartyl/glutamyl-tRNA(Asn/Gln) amidotransferase subunit C.